A 367-amino-acid chain; its full sequence is Probable protein phosphatase 2C 57 (367 aa).

A disordered region spans residues 1–29 (MEEHRLGGGGGGGGGGGRPPIPGAAGRKL). Residues 7-18 (GGGGGGGGGGGR) show a composition bias toward gly residues. In terms of domain architecture, PPM-type phosphatase spans 67–331 (RSGGWADIGS…DNLSVVVICF (265 aa)). D111, G112, D279, and D322 together coordinate Mn(2+).

It belongs to the PP2C family. The cofactor is Mg(2+). Mn(2+) serves as cofactor.

The catalysed reaction is O-phospho-L-seryl-[protein] + H2O = L-seryl-[protein] + phosphate. The enzyme catalyses O-phospho-L-threonyl-[protein] + H2O = L-threonyl-[protein] + phosphate. This is Probable protein phosphatase 2C 57 from Oryza sativa subsp. japonica (Rice).